Here is a 231-residue protein sequence, read N- to C-terminus: MAKLTKRQKAIASKIEAGKSYNFVDAAALLTELSTVKFSESVDVAVNLGVDPRKSDQVVRSATVLPHGTGKTVRVAVFTQGPAAEAALAAGADRVGMDDLAAEMKAGDLNYDVVIASPDAMRVVGQLGQVLGPRGLMPNPKVGTVTPDVANAVKNAKAGQVRYRTDKNGIIHTSVGKVGFDAVKLKENVEALIADLKRIKPASSKGIYVKRITLSTTMGPGLVIDQGSLEA.

This sequence belongs to the universal ribosomal protein uL1 family. In terms of assembly, part of the 50S ribosomal subunit.

Functionally, binds directly to 23S rRNA. The L1 stalk is quite mobile in the ribosome, and is involved in E site tRNA release. In terms of biological role, protein L1 is also a translational repressor protein, it controls the translation of the L11 operon by binding to its mRNA. This is Large ribosomal subunit protein uL1 from Pseudomonas savastanoi pv. phaseolicola (strain 1448A / Race 6) (Pseudomonas syringae pv. phaseolicola (strain 1448A / Race 6)).